The chain runs to 388 residues: Chorismate synthase (388 aa).

Residues R39 and R45 each coordinate NADP(+). Residues 130–132, 251–252, G296, 311–315, and R337 contribute to the FMN site; these read RSS, NA, and KPIPT.

It belongs to the chorismate synthase family. Homotetramer. Requires FMNH2 as cofactor.

It carries out the reaction 5-O-(1-carboxyvinyl)-3-phosphoshikimate = chorismate + phosphate. It participates in metabolic intermediate biosynthesis; chorismate biosynthesis; chorismate from D-erythrose 4-phosphate and phosphoenolpyruvate: step 7/7. Its function is as follows. Catalyzes the anti-1,4-elimination of the C-3 phosphate and the C-6 proR hydrogen from 5-enolpyruvylshikimate-3-phosphate (EPSP) to yield chorismate, which is the branch point compound that serves as the starting substrate for the three terminal pathways of aromatic amino acid biosynthesis. This reaction introduces a second double bond into the aromatic ring system. The chain is Chorismate synthase from Lactococcus lactis subsp. cremoris (strain SK11).